The chain runs to 373 residues: Glutamine synthetase (373 aa).

At Ala-2 the chain carries N-acetylalanine. The interval 2 to 25 (ATSASSHLNKGIKQMYMSLPQGEK) is required for glutamine-induced ubiquitination by CRL4(CRBN) and proteasomal degradation. N6-acetyllysine occurs at positions 11 and 14. The 83-residue stretch at 24–106 (EKVQAMYIWV…VFCEVFKYNQ (83 aa)) folds into the GS beta-grasp domain. Position 104 is a phosphotyrosine (Tyr-104). Positions 113–373 (LRHTCKRIMD…TGDQPFQYKN (261 aa)) constitute a GS catalytic domain. Glu-134 provides a ligand contact to ATP. Residues Glu-134, Glu-136, Glu-196, and Glu-203 each coordinate Mn(2+). 203–208 (EFQIGP) is a binding site for ATP. 246–247 (NW) is a binding site for L-glutamate. His-253 lines the Mn(2+) pocket. Residues 255–257 (NFS), Arg-319, and Arg-324 contribute to the ATP site. Arg-319 provides a ligand contact to L-glutamate. 336–338 (YFE) contacts ADP. Mn(2+) is bound at residue Glu-338. Residue Arg-340 participates in L-glutamate binding. Position 343 is a phosphoserine (Ser-343).

It belongs to the glutamine synthetase family. In terms of assembly, decamer; composed of two pentamers. Interacts with PALMD. Interacts with RHOJ. Interacts with BEST2; this interaction tethers a fraction of GLUL to the membrane, causing a decrease of cytosolic glutamine synthase (GS) activity and inhibits the chloride channel activity of BEST2 by affecting the gating at the aperture in the absence of intracellular glutamate. It depends on Mg(2+) as a cofactor. The cofactor is Mn(2+). Post-translationally, palmitoylated; undergoes autopalmitoylation. Acetylated by EP300/p300; acetylation is stimulated by increased glutamine levels and promotes ubiquitin-mediated proteasomal degradation. In terms of processing, ubiquitinated by ZNRF1. Ubiquitinated by the DCX (DDB1-CUL4-X-box) E3 ubiquitin-protein ligase complex called CRL4(CRBN), leading to proteasomal degradation.

The protein resides in the cytoplasm. Its subcellular location is the cytosol. The protein localises to the microsome. It localises to the mitochondrion. It is found in the cell membrane. The catalysed reaction is L-glutamate + NH4(+) + ATP = L-glutamine + ADP + phosphate + H(+). It carries out the reaction L-cysteinyl-[protein] + hexadecanoyl-CoA = S-hexadecanoyl-L-cysteinyl-[protein] + CoA. Glutamine synthetase activity is inhibited by methionine sulfoximine (MSO). In terms of biological role, glutamine synthetase that catalyzes the ATP-dependent conversion of glutamate and ammonia to glutamine. Its role depends on tissue localization: in the brain, it regulates the levels of toxic ammonia and converts neurotoxic glutamate to harmless glutamine, whereas in the liver, it is one of the enzymes responsible for the removal of ammonia. Plays a key role in ammonium detoxification during erythropoiesis: the glutamine synthetase activity is required to remove ammonium generated by porphobilinogen deaminase (HMBS) during heme biosynthesis to prevent ammonium accumulation and oxidative stress. Essential for proliferation of fetal skin fibroblasts. Independently of its glutamine synthetase activity, required for endothelial cell migration during vascular development. Involved in angiogenesis by regulating membrane localization and activation of the GTPase RHOJ, possibly by promoting RHOJ palmitoylation. May act as a palmitoyltransferase for RHOJ: able to autopalmitoylate and then transfer the palmitoyl group to RHOJ. Plays a role in ribosomal 40S subunit biogenesis. Through the interaction with BEST2, inhibits BEST2 channel activity by affecting the gating at the aperture in the absence of intracellular L-glutamate, but sensitizes BEST2 to intracellular L-glutamate, which promotes the opening of BEST2 and thus relieves its inhibitory effect on BEST2. The sequence is that of Glutamine synthetase from Cricetulus griseus (Chinese hamster).